The primary structure comprises 903 residues: Protein translocase subunit SecA (903 aa).

ATP contacts are provided by residues Gln-87, 105–109 (GEGKT), and Asp-513. A compositionally biased stretch (basic and acidic residues) spans 840–853 (MEAQRRAQAEEAAR). Positions 840–903 (MEAQRRAQAE…KYKQCHGQIN (64 aa)) are disordered. The Zn(2+) site is built by Cys-887, Cys-889, Cys-898, and His-899.

It belongs to the SecA family. As to quaternary structure, monomer and homodimer. Part of the essential Sec protein translocation apparatus which comprises SecA, SecYEG and auxiliary proteins SecDF-YajC and YidC. Requires Zn(2+) as cofactor.

It is found in the cell inner membrane. Its subcellular location is the cytoplasm. It catalyses the reaction ATP + H2O + cellular proteinSide 1 = ADP + phosphate + cellular proteinSide 2.. Its function is as follows. Part of the Sec protein translocase complex. Interacts with the SecYEG preprotein conducting channel. Has a central role in coupling the hydrolysis of ATP to the transfer of proteins into and across the cell membrane, serving both as a receptor for the preprotein-SecB complex and as an ATP-driven molecular motor driving the stepwise translocation of polypeptide chains across the membrane. The polypeptide is Protein translocase subunit SecA (Vibrio cholerae serotype O1 (strain M66-2)).